The primary structure comprises 102 residues: Protein GOLVEN 4 (102 aa).

The N-terminal stretch at 1 to 27 is a signal peptide; it reads MEMKKWSYANLITLALLFLFFIILLLA. Positions 28–89 are excised as a propeptide; the sequence is FQGGSRDDDH…QEREVYVELR (62 aa). Positions 56–78 are disordered; the sequence is KSLKPINPTKKNGFEYPDQGSHD. Sulfotyrosine is present on Tyr-91. Pro-99 is modified (hydroxyproline).

It belongs to the RGF family. Binds to LRR receptor-like serine/threonine-protein kinases to trigger their dimerization with SERK proteins and subsequent signaling. As to expression, expressed in roots and sepals.

Its subcellular location is the secreted. Its function is as follows. Signaling peptide (root growth factor) that promotes root hairs formation and growth. Maintains the postembryonic root stem cell niche. Regulates the pattern of root growth and lateral root development by modulating the length and the number of cortical cells in the root apical meristem (RAM), and the anticlinal asymmetric cell divisions in lateral root initiation cells. The protein is Protein GOLVEN 4 of Arabidopsis thaliana (Mouse-ear cress).